The primary structure comprises 320 residues: Cytochrome f (320 aa).

A signal peptide spans 1–35 (MQMRNTFSWIKEEIIRFIAVSLIIYIITRAPISNA). Residues tyrosine 36, cysteine 56, cysteine 59, and histidine 60 each coordinate heme. A helical membrane pass occupies residues 286 to 306 (VQGLLLFLASIILAQIFLVLK).

This sequence belongs to the cytochrome f family. The 4 large subunits of the cytochrome b6-f complex are cytochrome b6, subunit IV (17 kDa polypeptide, petD), cytochrome f and the Rieske protein, while the 4 small subunits are PetG, PetL, PetM and PetN. The complex functions as a dimer. The cofactor is heme.

The protein localises to the plastid. It is found in the chloroplast thylakoid membrane. Its function is as follows. Component of the cytochrome b6-f complex, which mediates electron transfer between photosystem II (PSII) and photosystem I (PSI), cyclic electron flow around PSI, and state transitions. The chain is Cytochrome f from Morus indica (Mulberry).